Here is a 772-residue protein sequence, read N- to C-terminus: Phosphoribosylformylglycinamidine synthase subunit PurL (772 aa).

His62 is an active-site residue. Positions 65 and 109 each coordinate ATP. A Mg(2+)-binding site is contributed by Glu111. Substrate is bound by residues 112-115 (SHNH) and Arg134. The active-site Proton acceptor is the His113. Asp135 is a Mg(2+) binding site. A substrate-binding site is contributed by Gln259. Position 287 (Asp287) interacts with Mg(2+). 331 to 333 (ESQ) lines the substrate pocket. Residues Asp519 and Gly556 each coordinate ATP. Asn557 contacts Mg(2+). Ser559 lines the substrate pocket.

Belongs to the FGAMS family. As to quaternary structure, monomer. Part of the FGAM synthase complex composed of 1 PurL, 1 PurQ and 2 PurS subunits.

The protein resides in the cytoplasm. The catalysed reaction is N(2)-formyl-N(1)-(5-phospho-beta-D-ribosyl)glycinamide + L-glutamine + ATP + H2O = 2-formamido-N(1)-(5-O-phospho-beta-D-ribosyl)acetamidine + L-glutamate + ADP + phosphate + H(+). The protein operates within purine metabolism; IMP biosynthesis via de novo pathway; 5-amino-1-(5-phospho-D-ribosyl)imidazole from N(2)-formyl-N(1)-(5-phospho-D-ribosyl)glycinamide: step 1/2. Part of the phosphoribosylformylglycinamidine synthase complex involved in the purines biosynthetic pathway. Catalyzes the ATP-dependent conversion of formylglycinamide ribonucleotide (FGAR) and glutamine to yield formylglycinamidine ribonucleotide (FGAM) and glutamate. The FGAM synthase complex is composed of three subunits. PurQ produces an ammonia molecule by converting glutamine to glutamate. PurL transfers the ammonia molecule to FGAR to form FGAM in an ATP-dependent manner. PurS interacts with PurQ and PurL and is thought to assist in the transfer of the ammonia molecule from PurQ to PurL. This is Phosphoribosylformylglycinamidine synthase subunit PurL from Leifsonia xyli subsp. xyli (strain CTCB07).